Reading from the N-terminus, the 219-residue chain is Phosphoribosylformylglycinamidine synthase subunit PurQ (219 aa).

Residues 2–219 enclose the Glutamine amidotransferase type-1 domain; sequence KIAVITFPGS…KVVLDLILGS (218 aa). Catalysis depends on cysteine 86, which acts as the Nucleophile. Active-site residues include histidine 195 and glutamate 197.

In terms of assembly, part of the FGAM synthase complex composed of 1 PurL, 1 PurQ and 2 PurS subunits.

It is found in the cytoplasm. The enzyme catalyses N(2)-formyl-N(1)-(5-phospho-beta-D-ribosyl)glycinamide + L-glutamine + ATP + H2O = 2-formamido-N(1)-(5-O-phospho-beta-D-ribosyl)acetamidine + L-glutamate + ADP + phosphate + H(+). The catalysed reaction is L-glutamine + H2O = L-glutamate + NH4(+). It functions in the pathway purine metabolism; IMP biosynthesis via de novo pathway; 5-amino-1-(5-phospho-D-ribosyl)imidazole from N(2)-formyl-N(1)-(5-phospho-D-ribosyl)glycinamide: step 1/2. Functionally, part of the phosphoribosylformylglycinamidine synthase complex involved in the purines biosynthetic pathway. Catalyzes the ATP-dependent conversion of formylglycinamide ribonucleotide (FGAR) and glutamine to yield formylglycinamidine ribonucleotide (FGAM) and glutamate. The FGAM synthase complex is composed of three subunits. PurQ produces an ammonia molecule by converting glutamine to glutamate. PurL transfers the ammonia molecule to FGAR to form FGAM in an ATP-dependent manner. PurS interacts with PurQ and PurL and is thought to assist in the transfer of the ammonia molecule from PurQ to PurL. The protein is Phosphoribosylformylglycinamidine synthase subunit PurQ of Leptospira interrogans serogroup Icterohaemorrhagiae serovar copenhageni (strain Fiocruz L1-130).